The following is a 291-amino-acid chain: N-acetylmannosamine kinase (291 aa).

Residues 5 to 12 (AIDIGGTK) and 132 to 139 (GVGGGVVC) contribute to the ATP site. The Zn(2+) site is built by histidine 156, cysteine 166, cysteine 168, and cysteine 173.

It belongs to the ROK (NagC/XylR) family. NanK subfamily. As to quaternary structure, homodimer.

It carries out the reaction an N-acyl-D-mannosamine + ATP = an N-acyl-D-mannosamine 6-phosphate + ADP + H(+). It functions in the pathway amino-sugar metabolism; N-acetylneuraminate degradation; D-fructose 6-phosphate from N-acetylneuraminate: step 2/5. Catalyzes the phosphorylation of N-acetylmannosamine (ManNAc) to ManNAc-6-P. The chain is N-acetylmannosamine kinase from Salmonella paratyphi A (strain ATCC 9150 / SARB42).